Here is a 421-residue protein sequence, read N- to C-terminus: Forkhead box protein fkh-3 (421 aa).

The fork-head DNA-binding region spans 118 to 218 (RPPISYVALC…SDADFDFFRK (101 aa)).

Its subcellular location is the nucleus. Transcription factor. Binds to DNA sequence motif 5'-CTGTTTCA-3'. Regulates expression of a class of small RNAs, known as 21U-RNAs, perhaps acting redundantly with fkh-4 and fkh-5. The protein is Forkhead box protein fkh-3 of Caenorhabditis elegans.